The primary structure comprises 181 residues: ATP synthase subunit delta (181 aa).

The protein belongs to the ATPase delta chain family. In terms of assembly, F-type ATPases have 2 components, F(1) - the catalytic core - and F(0) - the membrane proton channel. F(1) has five subunits: alpha(3), beta(3), gamma(1), delta(1), epsilon(1). F(0) has three main subunits: a(1), b(2) and c(10-14). The alpha and beta chains form an alternating ring which encloses part of the gamma chain. F(1) is attached to F(0) by a central stalk formed by the gamma and epsilon chains, while a peripheral stalk is formed by the delta and b chains.

It is found in the cell inner membrane. In terms of biological role, f(1)F(0) ATP synthase produces ATP from ADP in the presence of a proton or sodium gradient. F-type ATPases consist of two structural domains, F(1) containing the extramembraneous catalytic core and F(0) containing the membrane proton channel, linked together by a central stalk and a peripheral stalk. During catalysis, ATP synthesis in the catalytic domain of F(1) is coupled via a rotary mechanism of the central stalk subunits to proton translocation. This protein is part of the stalk that links CF(0) to CF(1). It either transmits conformational changes from CF(0) to CF(1) or is implicated in proton conduction. In Fervidobacterium nodosum (strain ATCC 35602 / DSM 5306 / Rt17-B1), this protein is ATP synthase subunit delta.